The chain runs to 218 residues: Protein U63 (218 aa).

Belongs to the herpesviridae UL92 family.

The sequence is that of Protein U63 (U63) from Homo sapiens (Human).